Reading from the N-terminus, the 406-residue chain is Putative sodium-coupled neutral amino acid transporter 11 (406 aa).

The Cytoplasmic segment spans residues 1–7 (MKQAGFP). Residues 8–28 (LGILLLFWVSYVTDFSLVLLI) traverse the membrane as a helical segment. The N-linked (GlcNAc...) asparagine glycan is linked to N44. 6 helical membrane passes run 48 to 68 (GFPG…IAMI), 93 to 113 (VFIG…LPLS), 121 to 141 (LGKV…IVMA), 156 to 176 (AWVF…FAFI), 202 to 222 (MSIV…YLTF), and 241 to 263 (VTFG…CFVT). A glycan (N-linked (GlcNAc...) asparagine) is linked at N275. Transmembrane regions (helical) follow at residues 279-299 (VFHI…SLLI), 301-321 (CLGI…IFII), and 340-360 (IMSC…FVMA).

Belongs to the amino acid/polyamine transporter 2 family.

It localises to the membrane. Functionally, putative sodium-dependent amino acid/proton antiporter. This Homo sapiens (Human) protein is Putative sodium-coupled neutral amino acid transporter 11 (SLC38A11).